Here is a 341-residue protein sequence, read N- to C-terminus: tRNA N6-adenosine threonylcarbamoyltransferase (341 aa).

His-111 and His-115 together coordinate Fe cation. Substrate-binding positions include 134-138 (LVSGG), Asp-167, Gly-180, and Asn-276. Asp-304 contacts Fe cation.

Belongs to the KAE1 / TsaD family. The cofactor is Fe(2+).

The protein resides in the cytoplasm. It catalyses the reaction L-threonylcarbamoyladenylate + adenosine(37) in tRNA = N(6)-L-threonylcarbamoyladenosine(37) in tRNA + AMP + H(+). In terms of biological role, required for the formation of a threonylcarbamoyl group on adenosine at position 37 (t(6)A37) in tRNAs that read codons beginning with adenine. Is involved in the transfer of the threonylcarbamoyl moiety of threonylcarbamoyl-AMP (TC-AMP) to the N6 group of A37, together with TsaE and TsaB. TsaD likely plays a direct catalytic role in this reaction. The sequence is that of tRNA N6-adenosine threonylcarbamoyltransferase from Ectopseudomonas mendocina (strain ymp) (Pseudomonas mendocina).